We begin with the raw amino-acid sequence, 776 residues long: Angiomotin-like protein 2 (776 aa).

Residues 41 to 88 form a disordered region; it reads GGAGAGGTGSPQASAEILAPEDTQVLQQATRQEPQGQEHQGGESHLAE. Positions 101–307 are required for interaction with CDH5; the sequence is GEELPTYEEA…STQTSSAPSG (207 aa). Residue tyrosine 107 is modified to Phosphotyrosine. 3 disordered regions span residues 119–142, 169–215, and 283–309; these read AQQA…GHRS, RNGA…QYPH, and GPLG…SGSA. The span at 177-192 shows a compositional bias: polar residues; the sequence is HMSSSHSFPQLARNQQ. Pro residues predominate over residues 196-213; that stretch reads PRGPPAEGPEPRGPPPQY. The interval 220 to 307 is required for interaction with CDH1; the sequence is HETATAVTDP…STQTSSAPSG (88 aa). Positions 297 to 306 are enriched in polar residues; the sequence is ASTQTSSAPS. Coiled-coil stretches lie at residues 314–509 and 543–570; these read METL…LELR and ALRL…WEQK. Glycyl lysine isopeptide (Lys-Gly) (interchain with G-Cter in ubiquitin) cross-links involve residues lysine 347 and lysine 408. Disordered regions lie at residues 591–620 and 677–743; these read QRDT…GHRH and TQGW…LDPD. Over residues 678–687 the composition is skewed to polar residues; that stretch reads QGWQSLSSSE. Phosphoserine occurs at positions 756 and 759. The PDZ-binding signature appears at 773–776; the sequence is EILI.

It belongs to the angiomotin family. In terms of assembly, part of a complex composed of AMOTL2, MAGI1 and CDH5, within the complex AMOTL2 acts as a scaffold protein for the interaction of MAGI1 with CDH5. The complex is required for coupling actin fibers to cell junctions in endothelial cells. Within the complex AMOTL2 (via its N-terminus) interacts with CDH5. Interacts (via N-terminus) with MAGI1. Interacts (via N-terminus) with ACTB; the interaction facilitates binding of cell junction complexes to actin fibers in endothelial cells. Interacts with CDH1; the interaction may facilitate binding of radial actin fibers to cell junction complexes. Interacts with SRC. Interacts with YAP1; the interaction is required for ubiquitination of AMOTL2 and localization of YAP1 to tight junctions. Interacts with WWP1; the interaction facilitates WWP1 interaction with the Crumbs complex and subsequent WWP1 translocation to the plasma membrane. WPP1 interaction with the Crumbs complex promotes WPP1 monoubiquitination of AMOTL2 which subsequently activates the Hippo signaling pathway. When ubiquitinated interacts with LATS2 (via UBA domain); the interaction promotes LATS2 phosphorylation of YAP1. Interacts (via PPXY motif) with WWTR1/TAZ (via WW domain); the interaction promotes WWTR1/TAZ localization to the cytoplasm and thereby inhibition of its transcriptional properties. Interacts with PHLDB2; interaction may facilitate PHLDB2 localization to the myotube podosome cortex that surrounds the core. Monoubiquitinated at Lys-347 and Lys-408 by Crumbs complex-bound WWP1. De-ubiquitinated at Lys-347 and Lys-408 by USP9X; the interaction may be promoted by cell contact inhibition. Deubiquitination of AMOTL2 negatively regulates Hippo signaling activation. In terms of processing, phosphorylation at Tyr-107 is necessary for efficient binding to SRC and synergistically functioning with SRC to activate the downstream MAPK pathway.

It is found in the recycling endosome. It localises to the cytoplasm. Its subcellular location is the cell projection. The protein localises to the podosome. The protein resides in the cell junction. Regulates the translocation of phosphorylated SRC to peripheral cell-matrix adhesion sites. Required for proper architecture of actin filaments. Plays a role in coupling actin fibers to cell junctions in endothelial cells and is therefore required for correct endothelial cell morphology via facilitating transcellular transmission of mechanical force resulting in endothelial cell elongation. Required for the anchoring of radial actin fibers to CDH1 junction complexes at the cell membrane which facilitates organization of radial actin fiber structure and cellular response to contractile forces. This contributes to maintenance of cell area, size, shape, epithelial sheet organization and trophectoderm cell properties that facilitate blastocyst zona hatching. Inhibits the Wnt/beta-catenin signaling pathway, probably by recruiting CTNNB1 to recycling endosomes and hence preventing its translocation to the nucleus. Participates in angiogenesis. Activates the Hippo signaling pathway in response to cell contact inhibition via interaction with and ubiquitination by Crumbs complex-bound WWP1. Ubiquitinated AMOTL2 then interacts with LATS2 which in turn phosphorylates YAP1, excluding it from the nucleus and localizing it to the cytoplasm and tight junctions, therefore ultimately repressing YAP1-driven transcription of target genes. Acts to inhibit WWTR1/TAZ transcriptional coactivator activity via sequestering WWTR1/TAZ in the cytoplasm and at tight junctions. Regulates the size and protein composition of the podosome cortex and core at myofibril neuromuscular junctions. Selectively promotes FGF-induced MAPK activation through SRC. May play a role in the polarity, proliferation and migration of endothelial cells. This is Angiomotin-like protein 2 from Canis lupus familiaris (Dog).